A 239-amino-acid chain; its full sequence is ATP synthase subunit a (239 aa).

The next 5 membrane-spanning stretches (helical) occupy residues 13-33 (IWFDGTIVLMVLLTCIIVFAF), 75-95 (FHLMAFTLFMFVLVSNILGLV), 113-133 (DPIVTLTLAMMMIVLTHFFGM), 174-194 (GNIFAGEVLLGLIAGTVASVG), and 208-230 (WVAFSIFIGCIQAFIFVTLSMVY).

The protein belongs to the ATPase A chain family. In terms of assembly, F-type ATPases have 2 components, CF(1) - the catalytic core - and CF(0) - the membrane proton channel. CF(1) has five subunits: alpha(3), beta(3), gamma(1), delta(1), epsilon(1). CF(0) has three main subunits: a(1), b(2) and c(9-12). The alpha and beta chains form an alternating ring which encloses part of the gamma chain. CF(1) is attached to CF(0) by a central stalk formed by the gamma and epsilon chains, while a peripheral stalk is formed by the delta and b chains.

It is found in the cell membrane. Its function is as follows. Key component of the proton channel; it plays a direct role in the translocation of protons across the membrane. This is ATP synthase subunit a from Enterococcus faecalis (strain ATCC 700802 / V583).